Consider the following 193-residue polypeptide: dTTP/UTP pyrophosphatase (193 aa).

Catalysis depends on aspartate 75, which acts as the Proton acceptor.

The protein belongs to the Maf family. YhdE subfamily. The cofactor is a divalent metal cation.

It localises to the cytoplasm. The catalysed reaction is dTTP + H2O = dTMP + diphosphate + H(+). It catalyses the reaction UTP + H2O = UMP + diphosphate + H(+). Its function is as follows. Nucleoside triphosphate pyrophosphatase that hydrolyzes dTTP and UTP. May have a dual role in cell division arrest and in preventing the incorporation of modified nucleotides into cellular nucleic acids. In Koribacter versatilis (strain Ellin345), this protein is dTTP/UTP pyrophosphatase.